The following is a 452-amino-acid chain: tRNA modification GTPase MnmE (452 aa).

R24, E81, and R120 together coordinate (6S)-5-formyl-5,6,7,8-tetrahydrofolate. The TrmE-type G domain maps to 216-373; the sequence is GIKTVIVGAP…LFGAIGRWAD (158 aa). GTP is bound by residues 226–231, 245–251, and 270–273; these read NVGKSS, SAEPGTT, and DTAG. Mg(2+)-binding residues include S230 and T251. Residue K452 coordinates (6S)-5-formyl-5,6,7,8-tetrahydrofolate.

It belongs to the TRAFAC class TrmE-Era-EngA-EngB-Septin-like GTPase superfamily. TrmE GTPase family. Homodimer. Heterotetramer of two MnmE and two MnmG subunits. K(+) serves as cofactor.

The protein resides in the cytoplasm. In terms of biological role, exhibits a very high intrinsic GTPase hydrolysis rate. Involved in the addition of a carboxymethylaminomethyl (cmnm) group at the wobble position (U34) of certain tRNAs, forming tRNA-cmnm(5)s(2)U34. This Opitutus terrae (strain DSM 11246 / JCM 15787 / PB90-1) protein is tRNA modification GTPase MnmE.